Reading from the N-terminus, the 202-residue chain is Peroxynitrite isomerase (202 aa).

The GXWXGXG signature appears at 21–27 (GEWEGRG). Residue H193 coordinates heme b.

The protein belongs to the nitrobindin family. Homodimer. Heme b serves as cofactor.

The catalysed reaction is peroxynitrite = nitrate. Its pathway is nitrogen metabolism. In terms of biological role, heme-binding protein able to scavenge peroxynitrite and to protect free L-tyrosine against peroxynitrite-mediated nitration, by acting as a peroxynitrite isomerase that converts peroxynitrite to nitrate. Therefore, this protein likely plays a role in peroxynitrite sensing and in the detoxification of reactive nitrogen and oxygen species (RNS and ROS, respectively). Is able to bind nitric oxide (NO) in vitro, but may act as a sensor of peroxynitrite levels in vivo. This chain is Peroxynitrite isomerase, found in Pseudarthrobacter chlorophenolicus (strain ATCC 700700 / DSM 12829 / CIP 107037 / JCM 12360 / KCTC 9906 / NCIMB 13794 / A6) (Arthrobacter chlorophenolicus).